The sequence spans 260 residues: Scytalidopepsin B (260 aa).

The first 20 residues, 1–20 (MKFTTAAVLSALVSAEIAFA), serve as a signal peptide directing secretion. Residues 21–54 (APGGNGFARRQARRQARAAGLKASPFRQVNAKEA) constitute a propeptide that is removed on maturation. Cys-101 and Cys-181 are disulfide-bonded. Glu-190 acts as the Proton acceptor in catalysis. Disulfide bonds link Cys-195/Cys-219 and Cys-248/Cys-257.

It belongs to the peptidase G1 family. As to quaternary structure, monomer.

It catalyses the reaction Hydrolysis of proteins with broad specificity, cleaving 24-Phe-|-Phe-25, but not 15-Leu-|-Tyr-16 and 25-Phe-|-Tyr-26 in the B chain of insulin.. The sequence is that of Scytalidopepsin B from Scytalidium lignicola (Hyphomycete).